A 379-amino-acid polypeptide reads, in one-letter code: Cytochrome b (379 aa).

Helical transmembrane passes span 33–53 (FGSL…FLAM), 77–98 (WTIR…FIHV), 113–133 (WNVG…GYVL), and 178–198 (FFAL…IHLL). Positions 83 and 97 each coordinate heme b. Heme b is bound by residues H182 and H196. H201 serves as a coordination point for a ubiquinone. Transmembrane regions (helical) follow at residues 226–246 (TKDF…ALFY), 288–308 (LGGV…PFLQ), 320–340 (LSQF…WIGG), and 347–367 (FINI…FIMP).

It belongs to the cytochrome b family. In terms of assembly, the cytochrome bc1 complex contains 11 subunits: 3 respiratory subunits (MT-CYB, CYC1 and UQCRFS1), 2 core proteins (UQCRC1 and UQCRC2) and 6 low-molecular weight proteins (UQCRH/QCR6, UQCRB/QCR7, UQCRQ/QCR8, UQCR10/QCR9, UQCR11/QCR10 and a cleavage product of UQCRFS1). This cytochrome bc1 complex then forms a dimer. Heme b is required as a cofactor.

It localises to the mitochondrion inner membrane. Its function is as follows. Component of the ubiquinol-cytochrome c reductase complex (complex III or cytochrome b-c1 complex) that is part of the mitochondrial respiratory chain. The b-c1 complex mediates electron transfer from ubiquinol to cytochrome c. Contributes to the generation of a proton gradient across the mitochondrial membrane that is then used for ATP synthesis. The chain is Cytochrome b (MT-CYB) from Lepilemur dorsalis (Grey-backed sportive lemur).